Reading from the N-terminus, the 273-residue chain is tRNA (guanine-N(7)-)-methyltransferase (273 aa).

Residues Met1–Asn31 show a composition bias toward polar residues. Positions Met1–Asp36 are disordered. 4 residues coordinate S-adenosyl-L-methionine: Glu105, Glu130, Asp157, and Asp179. Asp179 is an active-site residue. Substrate contacts are provided by residues Lys183, Asp215, and Thr252–Glu255.

It belongs to the class I-like SAM-binding methyltransferase superfamily. TrmB family.

It carries out the reaction guanosine(46) in tRNA + S-adenosyl-L-methionine = N(7)-methylguanosine(46) in tRNA + S-adenosyl-L-homocysteine. It participates in tRNA modification; N(7)-methylguanine-tRNA biosynthesis. In terms of biological role, catalyzes the formation of N(7)-methylguanine at position 46 (m7G46) in tRNA. In Psychrobacter cryohalolentis (strain ATCC BAA-1226 / DSM 17306 / VKM B-2378 / K5), this protein is tRNA (guanine-N(7)-)-methyltransferase.